Reading from the N-terminus, the 447-residue chain is UPF0210 protein OEOE_0945 (447 aa).

Belongs to the UPF0210 family. Homodimer.

The protein is UPF0210 protein OEOE_0945 of Oenococcus oeni (strain ATCC BAA-331 / PSU-1).